Consider the following 442-residue polypeptide: Trigger factor (442 aa).

The 86-residue stretch at 163-248 folds into the PPIase FKBP-type domain; it reads GDQVVIDFLG…IKEVKAPKAA (86 aa).

This sequence belongs to the FKBP-type PPIase family. Tig subfamily.

The protein resides in the cytoplasm. It carries out the reaction [protein]-peptidylproline (omega=180) = [protein]-peptidylproline (omega=0). Functionally, involved in protein export. Acts as a chaperone by maintaining the newly synthesized protein in an open conformation. Functions as a peptidyl-prolyl cis-trans isomerase. The polypeptide is Trigger factor (Dinoroseobacter shibae (strain DSM 16493 / NCIMB 14021 / DFL 12)).